A 306-amino-acid polypeptide reads, in one-letter code: Aspartate carbamoyltransferase catalytic subunit (306 aa).

Carbamoyl phosphate contacts are provided by Arg-54 and Thr-55. L-aspartate is bound at residue Lys-83. Carbamoyl phosphate contacts are provided by Arg-104, His-132, and Gln-135. L-aspartate is bound by residues Arg-165 and Arg-227. Residues Leu-266 and Pro-267 each coordinate carbamoyl phosphate.

Belongs to the aspartate/ornithine carbamoyltransferase superfamily. ATCase family. Heterododecamer (2C3:3R2) of six catalytic PyrB chains organized as two trimers (C3), and six regulatory PyrI chains organized as three dimers (R2).

It catalyses the reaction carbamoyl phosphate + L-aspartate = N-carbamoyl-L-aspartate + phosphate + H(+). It participates in pyrimidine metabolism; UMP biosynthesis via de novo pathway; (S)-dihydroorotate from bicarbonate: step 2/3. In terms of biological role, catalyzes the condensation of carbamoyl phosphate and aspartate to form carbamoyl aspartate and inorganic phosphate, the committed step in the de novo pyrimidine nucleotide biosynthesis pathway. The chain is Aspartate carbamoyltransferase catalytic subunit from Clostridium novyi (strain NT).